The sequence spans 696 residues: DNA-directed RNA polymerase subunit beta' (696 aa).

The Zn(2+) site is built by C69, C71, C87, and C90. 3 residues coordinate Mg(2+): D504, D506, and D508.

It belongs to the RNA polymerase beta' chain family. RpoC1 subfamily. In plastids the minimal PEP RNA polymerase catalytic core is composed of four subunits: alpha, beta, beta', and beta''. When a (nuclear-encoded) sigma factor is associated with the core the holoenzyme is formed, which can initiate transcription. It depends on Mg(2+) as a cofactor. The cofactor is Zn(2+).

The protein resides in the plastid. Its subcellular location is the chloroplast. It carries out the reaction RNA(n) + a ribonucleoside 5'-triphosphate = RNA(n+1) + diphosphate. In terms of biological role, DNA-dependent RNA polymerase catalyzes the transcription of DNA into RNA using the four ribonucleoside triphosphates as substrates. This chain is DNA-directed RNA polymerase subunit beta', found in Pinus thunbergii (Japanese black pine).